We begin with the raw amino-acid sequence, 290 residues long: MKKLLREASEYLLSRGIRFPQREAEDILMDLLEISSRSALHQAKLSSEEQSLYWKRLRKRGDRCPTAYIHGKVHFLGVELQVTPQVLIPRQETEIFVEQIIGYLQMHKEKTTFYDVCCGSGCIGLAVRKHCPHVRVTLSDISPEALAIAESNARSNALAVDFLLGDLFDPFSFPADVLVCNPPYLSYKEFFESDPEVRCHEPWKALVGGVSGLEFYHRIATHIHKILVSGGVGWLEIGSTQGEDIKQIFHAKGIRGRVLKDYAQLDRFFFLENQANDAVSSGEVSGFSER.

2 residues coordinate S-adenosyl-L-methionine: Asp140 and Asn181. A substrate-binding site is contributed by 181–184; it reads NPPY.

The protein belongs to the protein N5-glutamine methyltransferase family. PrmC subfamily.

It carries out the reaction L-glutaminyl-[peptide chain release factor] + S-adenosyl-L-methionine = N(5)-methyl-L-glutaminyl-[peptide chain release factor] + S-adenosyl-L-homocysteine + H(+). Methylates the class 1 translation termination release factors RF1/PrfA and RF2/PrfB on the glutamine residue of the universally conserved GGQ motif. This Chlamydia trachomatis serovar D (strain ATCC VR-885 / DSM 19411 / UW-3/Cx) protein is Release factor glutamine methyltransferase.